The primary structure comprises 164 residues: Interferon gamma (164 aa).

Residues 1-19 (MTCQTYNLFVLSVIMIYYG) form the signal peptide. 2 N-linked (GlcNAc...) asparagine glycosylation sites follow: Asn-42 and Asn-61.

It belongs to the type II (or gamma) interferon family. Homodimer.

It is found in the secreted. Its function is as follows. Produced by lymphocytes activated by specific antigens or mitogens. IFN-gamma, in addition to having antiviral activity, has important immunoregulatory functions. It is a potent activator of macrophages, it has antiproliferative effects on transformed cells and it can potentiate the antiviral and antitumor effects of the type I interferons. The polypeptide is Interferon gamma (IFNG) (Numida meleagris (Helmeted guineafowl)).